We begin with the raw amino-acid sequence, 508 residues long: Ell-associated factor Eaf (508 aa).

Polar residues-rich tracts occupy residues 140 to 150 (GQGQLHSQGAN) and 161 to 190 (GHST…SRRN). Disordered stretches follow at residues 140-226 (GQGQ…WDAN) and 251-508 (HNSG…DDDE). Ser200 bears the Phosphoserine mark. Over residues 251–268 (HNSGHANTSGSSTGSATG) the composition is skewed to low complexity. Polar residues-rich tracts occupy residues 272–281 (FGSTSSSSHM) and 296–313 (QQMQ…QQPS). The span at 314-341 (NYGRGYNGGHNHVQQQQQRNSPQQQRPP) shows a compositional bias: low complexity. The segment covering 391–406 (DSSDSDSGSDSDDSTE) has biased composition (acidic residues). 3 stretches are compositionally biased toward low complexity: residues 412–444 (QGQQ…HLNQ), 461–477 (HQHQ…QKQQ), and 489–502 (NDLL…SSNS).

Belongs to the EAF family.

It is found in the nucleus. Its function is as follows. Promotes transcriptional elongation by Su(Tpl)/ELL. Essential for development. This chain is Ell-associated factor Eaf, found in Drosophila erecta (Fruit fly).